We begin with the raw amino-acid sequence, 888 residues long: Mitogen-activated protein kinase kinase kinase 12 (888 aa).

Positions 26–42 (MRKLDPDTSDCTPEKDL) are enriched in basic and acidic residues. The segment at 26-104 (MRKLDPDTSD…TGSPESRASR (79 aa)) is disordered. A phosphothreonine mark is found at Thr-37 and Thr-43. Over residues 64–75 (SPSPGGEPPPEP) the composition is skewed to pro residues. The 242-residue stretch at 158-399 (ILDLQWVGSG…FRQILLHLDI (242 aa)) folds into the Protein kinase domain. Residues 164-172 (VGSGAQGAV) and Lys-185 each bind ATP. Asp-269 functions as the Proton acceptor in the catalytic mechanism. 2 leucine-zipper regions span residues 423-444 (VKLHFEKIKSEGTCLHRLEEEL) and 476-497 (LNALMLQLELKERELLRREQAL). A disordered region spans residues 557–620 (GVGLPGCPKA…GGLGVGPTAW (64 aa)). Residues 572–584 (RSRRGKTRHRKAS) show a composition bias toward basic residues. Positions 605–615 (GGLGSPGGLGV) are enriched in gly residues. Ser-640 is modified (phosphoserine). Disordered regions lie at residues 654 to 731 (RGRG…YQHL) and 743 to 888 (TRSQ…SLPP). A compositionally biased stretch (gly residues) spans 704 to 725 (PGEGVGLLGTGREGTTGRGGSR). The span at 752-763 (SEEEEGEVDSEV) shows a compositional bias: acidic residues. 2 stretches are compositionally biased toward polar residues: residues 776-789 (NMRQSLSTFSSENP) and 798-812 (SEPSPSGTPEVGSTN). Over residues 813-823 (TDERPDERSDD) the composition is skewed to basic and acidic residues.

This sequence belongs to the protein kinase superfamily. STE Ser/Thr protein kinase family. MAP kinase kinase kinase subfamily. Homodimer. Interacts with MBIP. Mg(2+) serves as cofactor. Post-translationally, autophosphorylated on Ser/Thr. Phosphorylated in cytosol under basal conditions and dephosphorylated when membrane-associated. The activity of MAP3K12 can be regulated through its proteasomal degradation. APOE, through a receptor-mediated mechanism, activates MAP3K12 by preventing its proteasomal degradation.

It is found in the cytoplasm. Its subcellular location is the cell membrane. It catalyses the reaction L-seryl-[protein] + ATP = O-phospho-L-seryl-[protein] + ADP + H(+). The enzyme catalyses L-threonyl-[protein] + ATP = O-phospho-L-threonyl-[protein] + ADP + H(+). Functionally, part of a non-canonical MAPK signaling pathway. Activated by APOE, enhances the AP-1-mediated transcription of APP, via a MAP kinase signal transduction pathway composed of MAP2K7 and MAPK1/ERK2 and MAPK3/ERK1. May be an activator of the JNK/SAPK pathway. This chain is Mitogen-activated protein kinase kinase kinase 12 (Map3k12), found in Rattus norvegicus (Rat).